Consider the following 260-residue polypeptide: CD40 ligand (260 aa).

The Cytoplasmic portion of the chain corresponds to 1 to 22 (MIETYSQPSPRSVATGLPASMK). Residues 23-46 (IFMYLLTVFLITQMIGSVLFAVYL) traverse the membrane as a helical; Signal-anchor for type II membrane protein segment. Residues 47-260 (HRRLDKVEEE…GFSSFGLLKL (214 aa)) lie on the Extracellular side of the membrane. The THD domain maps to 121-260 (IAAHVVSEAN…GFSSFGLLKL (140 aa)). Cysteines 177 and 217 form a disulfide. Asn239 is a glycosylation site (N-linked (GlcNAc...) asparagine).

The protein belongs to the tumor necrosis factor family. In terms of assembly, homotrimer. Interacts with CD28. CD40 ligand, soluble form: Exists as either a monomer or a homotrimer. Forms a ternary complex between CD40 and integrins for CD40-CD40LG signaling. The soluble form derives from the membrane form by proteolytic processing. As to expression, specifically expressed on activated CD4+ T-lymphocytes.

The protein resides in the cell membrane. The protein localises to the cell surface. It is found in the secreted. Its function is as follows. Cytokine that acts as a ligand to CD40/TNFRSF5. Costimulates T-cell proliferation and cytokine production. Its cross-linking on T-cells generates a costimulatory signal which enhances the production of IL4 and IL10 in conjunction with the TCR/CD3 ligation and CD28 costimulation. Induces the activation of NF-kappa-B. Induces the activation of kinases MAPK8 and PAK2 in T-cells. Mediates B-cell proliferation in the absence of co-stimulus as well as IgE production in the presence of IL4. Involved in immunoglobulin class switching. In terms of biological role, acts as a ligand for integrins, specifically ITGA5:ITGB1 and ITGAV:ITGB3; both integrins and the CD40 receptor are required for activation of CD40-CD40LG signaling, which have cell-type dependent effects, such as B-cell activation, NF-kappa-B signaling and anti-apoptotic signaling. The sequence is that of CD40 ligand (Cd40lg) from Mus musculus (Mouse).